The following is a 492-amino-acid chain: Cytochrome P450 2A2 (492 aa).

Cys437 is a heme binding site.

It belongs to the cytochrome P450 family. The cofactor is heme. In terms of tissue distribution, liver specific.

The protein localises to the endoplasmic reticulum membrane. It is found in the microsome membrane. It carries out the reaction an organic molecule + reduced [NADPH--hemoprotein reductase] + O2 = an alcohol + oxidized [NADPH--hemoprotein reductase] + H2O + H(+). Functionally, highly active in the 15-alpha-hydroxylation of testosterone. The sequence is that of Cytochrome P450 2A2 (Cyp2a2) from Rattus norvegicus (Rat).